Reading from the N-terminus, the 215-residue chain is Pyridoxine/pyridoxamine 5'-phosphate oxidase (215 aa).

Residues 8–11 and Lys-66 contribute to the substrate site; that span reads RQEY. FMN is bound by residues 61 to 66, 76 to 77, Arg-82, Lys-83, and Gln-105; these read RIVLLK and YT. 2 residues coordinate substrate: Tyr-123 and Arg-127. FMN-binding positions include 140–141 and Trp-186; that span reads QS. 192 to 194 is a substrate binding site; sequence RLH. Arg-196 lines the FMN pocket.

Belongs to the pyridoxamine 5'-phosphate oxidase family. As to quaternary structure, homodimer. Requires FMN as cofactor.

The enzyme catalyses pyridoxamine 5'-phosphate + O2 + H2O = pyridoxal 5'-phosphate + H2O2 + NH4(+). It catalyses the reaction pyridoxine 5'-phosphate + O2 = pyridoxal 5'-phosphate + H2O2. Its pathway is cofactor metabolism; pyridoxal 5'-phosphate salvage; pyridoxal 5'-phosphate from pyridoxamine 5'-phosphate: step 1/1. The protein operates within cofactor metabolism; pyridoxal 5'-phosphate salvage; pyridoxal 5'-phosphate from pyridoxine 5'-phosphate: step 1/1. In terms of biological role, catalyzes the oxidation of either pyridoxine 5'-phosphate (PNP) or pyridoxamine 5'-phosphate (PMP) into pyridoxal 5'-phosphate (PLP). In Salinibacter ruber (strain DSM 13855 / M31), this protein is Pyridoxine/pyridoxamine 5'-phosphate oxidase.